The chain runs to 78 residues: Probable [Fe-S]-dependent transcriptional repressor (78 aa).

The iron-sulfur cluster site is built by cysteine 56, cysteine 61, cysteine 64, and cysteine 70.

The protein belongs to the FeoC family.

May function as a transcriptional regulator that controls feoABC expression. The protein is Probable [Fe-S]-dependent transcriptional repressor of Salmonella agona (strain SL483).